The primary structure comprises 375 residues: Chaperone protein DnaJ (375 aa).

A J domain is found at 5 to 70 (DYYEILGVSK…QKRAAYDQYG (66 aa)). A CR-type zinc finger spans residues 130 to 208 (GVTKEIRIPT…CHGHGRVEKS (79 aa)). Residues C143, C146, C160, C163, C182, C185, C196, and C199 each coordinate Zn(2+). CXXCXGXG motif repeat units follow at residues 143-150 (CDVCHGSG), 160-167 (CPTCHGSG), 182-189 (CPHCQGRG), and 196-203 (CHKCHGHG).

It belongs to the DnaJ family. As to quaternary structure, homodimer. Requires Zn(2+) as cofactor.

The protein resides in the cytoplasm. Its function is as follows. Participates actively in the response to hyperosmotic and heat shock by preventing the aggregation of stress-denatured proteins and by disaggregating proteins, also in an autonomous, DnaK-independent fashion. Unfolded proteins bind initially to DnaJ; upon interaction with the DnaJ-bound protein, DnaK hydrolyzes its bound ATP, resulting in the formation of a stable complex. GrpE releases ADP from DnaK; ATP binding to DnaK triggers the release of the substrate protein, thus completing the reaction cycle. Several rounds of ATP-dependent interactions between DnaJ, DnaK and GrpE are required for fully efficient folding. Also involved, together with DnaK and GrpE, in the DNA replication of plasmids through activation of initiation proteins. The protein is Chaperone protein DnaJ of Salmonella paratyphi A (strain ATCC 9150 / SARB42).